The sequence spans 126 residues: Fluoride-specific ion channel FluC (126 aa).

4 helical membrane-spanning segments follow: residues 4-24, 33-53, 67-87, and 97-117; these read PLLS…FLGL, IPLG…FAMA, FVIT…IEIV, and MAML…CLGL. Residues G74 and T77 each coordinate Na(+).

This sequence belongs to the fluoride channel Fluc/FEX (TC 1.A.43) family.

It localises to the cell inner membrane. It catalyses the reaction fluoride(in) = fluoride(out). With respect to regulation, na(+) is not transported, but it plays an essential structural role and its presence is essential for fluoride channel function. Functionally, fluoride-specific ion channel. Important for reducing fluoride concentration in the cell, thus reducing its toxicity. This chain is Fluoride-specific ion channel FluC, found in Acinetobacter baumannii (strain AB307-0294).